The sequence spans 342 residues: 3-isopropylmalate dehydrogenase (342 aa).

Residues Arg87, Arg97, Arg121, and Asp212 each contribute to the substrate site. Positions 212, 236, and 240 each coordinate Mg(2+). 272-284 (GSAPDIAGRQLAD) contacts NAD(+). A compositionally biased stretch (low complexity) spans 319–328 (RAAAGAAQPS). A disordered region spans residues 319-342 (RAAAGAAQPSTRERGEDLAARAAG). Positions 329–342 (TRERGEDLAARAAG) are enriched in basic and acidic residues.

It belongs to the isocitrate and isopropylmalate dehydrogenases family. LeuB type 2 subfamily. Homodimer. Mg(2+) serves as cofactor. Requires Mn(2+) as cofactor.

It is found in the cytoplasm. The enzyme catalyses (2R,3S)-3-isopropylmalate + NAD(+) = 4-methyl-2-oxopentanoate + CO2 + NADH. It participates in amino-acid biosynthesis; L-leucine biosynthesis; L-leucine from 3-methyl-2-oxobutanoate: step 3/4. Its function is as follows. Catalyzes the oxidation of 3-carboxy-2-hydroxy-4-methylpentanoate (3-isopropylmalate) to 3-carboxy-4-methyl-2-oxopentanoate. The product decarboxylates to 4-methyl-2 oxopentanoate. The sequence is that of 3-isopropylmalate dehydrogenase from Frankia casuarinae (strain DSM 45818 / CECT 9043 / HFP020203 / CcI3).